A 156-amino-acid polypeptide reads, in one-letter code: Endoribonuclease YbeY (156 aa).

Residues His-115, His-119, and His-125 each coordinate Zn(2+).

Belongs to the endoribonuclease YbeY family. It depends on Zn(2+) as a cofactor.

The protein resides in the cytoplasm. In terms of biological role, single strand-specific metallo-endoribonuclease involved in late-stage 70S ribosome quality control and in maturation of the 3' terminus of the 16S rRNA. The chain is Endoribonuclease YbeY from Actinobacillus succinogenes (strain ATCC 55618 / DSM 22257 / CCUG 43843 / 130Z).